The primary structure comprises 197 residues: Recombination protein RecR (197 aa).

A C4-type zinc finger spans residues 57 to 72 (CSVCFGITEEDPCRLC). A Toprim domain is found at 79 to 174 (TSLCVVEEPQ…RVTRLAHGIP (96 aa)).

The protein belongs to the RecR family.

Its function is as follows. May play a role in DNA repair. It seems to be involved in an RecBC-independent recombinational process of DNA repair. It may act with RecF and RecO. This Geobacter metallireducens (strain ATCC 53774 / DSM 7210 / GS-15) protein is Recombination protein RecR.